A 756-amino-acid polypeptide reads, in one-letter code: Protein psiP (756 aa).

The N-terminal stretch at 1–23 is a signal peptide; sequence MFIQRTFLKVLTLLSIVTVLVHG. The Extracellular segment spans residues 24–692; it reads QTQPKDKITL…NCNTGAVVST (669 aa). N-linked (GlcNAc...) asparagine glycosylation is present at N82. Positions 126–281 constitute a PA14 domain; that stretch reads LNWNGEAYEY…VDYCGVCEGD (156 aa). N359, N483, N564, and N663 each carry an N-linked (GlcNAc...) asparagine glycan. A helical membrane pass occupies residues 693–713; it reads AVIAGSTVAGAVALGIFLYGG. The Cytoplasmic portion of the chain corresponds to 714-756; the sequence is KKGYDYWKDSRNISMGSSNSNPLYEEQQTGRGVNPMYDDPAAN. Positions 730-744 are enriched in polar residues; it reads SSNSNPLYEEQQTGR. Positions 730 to 756 are disordered; sequence SSNSNPLYEEQQTGRGVNPMYDDPAAN.

This sequence belongs to the prespore-cell-inducing factor family.

It is found in the membrane. This is Protein psiP (psiP) from Dictyostelium discoideum (Social amoeba).